A 277-amino-acid polypeptide reads, in one-letter code: Caspase-3 (277 aa).

Met-1 bears the N-acetylmethionine mark. Propeptides lie at residues 1 to 9 and 10 to 28; these read MENTENSVD and SKSI…QSMD. Positions 1 to 10 are enriched in polar residues; sequence MENTENSVDS. Residues 1–20 form a disordered region; the sequence is MENTENSVDSKSIKNLEPKI. Lys-11 is modified (N6-acetyllysine). The span at 11–20 shows a compositional bias: basic and acidic residues; that stretch reads KSIKNLEPKI. Ser-26 carries the post-translational modification Phosphoserine. Residues His-121 and Cys-163 contribute to the active site. Cys-163 is subject to S-nitrosocysteine; in inhibited form.

The protein belongs to the peptidase C14A family. Heterotetramer that consists of two anti-parallel arranged heterodimers, each one formed by a 17 kDa (p17) and a 12 kDa (p12) subunit. Interacts with BIRC6/bruce. In terms of processing, cleavage by granzyme B, caspase-6, caspase-8 and caspase-10 generates the two active subunits. Additional processing of the propeptides is likely due to the autocatalytic activity of the activated protease. Active heterodimers between the small subunit of caspase-7 protease and the large subunit of caspase-3 also occur and vice versa. S-nitrosylated on its catalytic site cysteine in unstimulated cell lines and denitrosylated upon activation of the Fas apoptotic pathway, associated with an increase in intracellular caspase activity. Fas therefore activates caspase-3 not only by inducing the cleavage of the caspase zymogen to its active subunits, but also by stimulating the denitrosylation of its active site thiol. Post-translationally, ubiquitinated by BIRC6; this activity is inhibited by DIABLO/SMAC.

Its subcellular location is the cytoplasm. It carries out the reaction Strict requirement for an Asp residue at positions P1 and P4. It has a preferred cleavage sequence of Asp-Xaa-Xaa-Asp-|- with a hydrophobic amino-acid residue at P2 and a hydrophilic amino-acid residue at P3, although Val or Ala are also accepted at this position.. Inhibited by BIRC6; following inhibition of BIRC6-caspase binding by DIABLO/SMAC, BIRC6 is subjected to caspase cleavage, leading to an increase in active caspases. In terms of biological role, involved in the activation cascade of caspases responsible for apoptosis execution. At the onset of apoptosis, it proteolytically cleaves poly(ADP-ribose) polymerase PARP1 at a '216-Asp-|-Gly-217' bond. Cleaves and activates sterol regulatory element binding proteins (SREBPs) between the basic helix-loop-helix leucine zipper domain and the membrane attachment domain. Cleaves and activates caspase-6, -7 and -9 (CASP6, CASP7 and CASP9, respectively). Cleaves and inactivates interleukin-18 (IL18). Triggers cell adhesion in sympathetic neurons through RET cleavage. Cleaves IL-1 beta between an Asp and an Ala, releasing the mature cytokine which is involved in a variety of inflammatory processes. Cleaves and inhibits serine/threonine-protein kinase AKT1 in response to oxidative stress. Acts as an inhibitor of type I interferon production during virus-induced apoptosis by mediating cleavage of antiviral proteins CGAS, IRF3 and MAVS, thereby preventing cytokine overproduction. Also involved in pyroptosis by mediating cleavage and activation of gasdermin-E (GSDME). Cleaves XRCC4 and phospholipid scramblase proteins XKR4, XKR8 and XKR9, leading to promote phosphatidylserine exposure on apoptotic cell surface. Cleaves BIRC6 following inhibition of BIRC6-caspase binding by DIABLO/SMAC. The chain is Caspase-3 (CASP3) from Pan troglodytes (Chimpanzee).